The following is a 458-amino-acid chain: Argininosuccinate lyase (458 aa).

The protein belongs to the lyase 1 family. Argininosuccinate lyase subfamily.

It localises to the cytoplasm. It carries out the reaction 2-(N(omega)-L-arginino)succinate = fumarate + L-arginine. The protein operates within amino-acid biosynthesis; L-arginine biosynthesis; L-arginine from L-ornithine and carbamoyl phosphate: step 3/3. This is Argininosuccinate lyase from Neisseria meningitidis serogroup C (strain 053442).